Reading from the N-terminus, the 422-residue chain is 3-phosphoshikimate 1-carboxyvinyltransferase (422 aa).

Positions 20, 21, and 25 each coordinate 3-phosphoshikimate. Residue Lys20 coordinates phosphoenolpyruvate. Phosphoenolpyruvate-binding residues include Gly90 and Arg118. 3-phosphoshikimate contacts are provided by Ser161, Ser162, Gln163, Ser189, Asp305, and Lys332. Gln163 is a phosphoenolpyruvate binding site. Asp305 acts as the Proton acceptor in catalysis. Arg336 and Arg378 together coordinate phosphoenolpyruvate.

This sequence belongs to the EPSP synthase family. In terms of assembly, monomer.

It localises to the cytoplasm. It catalyses the reaction 3-phosphoshikimate + phosphoenolpyruvate = 5-O-(1-carboxyvinyl)-3-phosphoshikimate + phosphate. The protein operates within metabolic intermediate biosynthesis; chorismate biosynthesis. Catalyzes the transfer of the enolpyruvyl moiety of phosphoenolpyruvate (PEP) to the 5-hydroxyl of shikimate-3-phosphate (S3P) to produce enolpyruvyl shikimate-3-phosphate and inorganic phosphate. This Nitrosopumilus maritimus (strain SCM1) protein is 3-phosphoshikimate 1-carboxyvinyltransferase.